A 407-amino-acid polypeptide reads, in one-letter code: Pyridinium-3,5-bisthiocarboxylic acid mononucleotide nickel insertion protein (407 aa).

It belongs to the LarC family.

It carries out the reaction Ni(II)-pyridinium-3,5-bisthiocarboxylate mononucleotide = pyridinium-3,5-bisthiocarboxylate mononucleotide + Ni(2+). Involved in the biosynthesis of a nickel-pincer cofactor ((SCS)Ni(II) pincer complex). Binds Ni(2+), and functions in nickel delivery to pyridinium-3,5-bisthiocarboxylic acid mononucleotide (P2TMN), to form the mature cofactor. Is thus probably required for the activation of nickel-pincer cofactor-dependent enzymes. This Acetivibrio thermocellus (strain ATCC 27405 / DSM 1237 / JCM 9322 / NBRC 103400 / NCIMB 10682 / NRRL B-4536 / VPI 7372) (Clostridium thermocellum) protein is Pyridinium-3,5-bisthiocarboxylic acid mononucleotide nickel insertion protein.